A 51-amino-acid polypeptide reads, in one-letter code: Large ribosomal subunit protein bL33 (51 aa).

This sequence belongs to the bacterial ribosomal protein bL33 family.

This is Large ribosomal subunit protein bL33 from Colwellia psychrerythraea (strain 34H / ATCC BAA-681) (Vibrio psychroerythus).